We begin with the raw amino-acid sequence, 121 residues long: Prefoldin subunit beta (121 aa).

The protein belongs to the prefoldin subunit beta family. In terms of assembly, heterohexamer of two alpha and four beta subunits.

The protein localises to the cytoplasm. In terms of biological role, molecular chaperone capable of stabilizing a range of proteins. Seems to fulfill an ATP-independent, HSP70-like function in archaeal de novo protein folding. The sequence is that of Prefoldin subunit beta from Caldivirga maquilingensis (strain ATCC 700844 / DSM 13496 / JCM 10307 / IC-167).